The chain runs to 469 residues: 3-isopropylmalate dehydratase large subunit (469 aa).

[4Fe-4S] cluster-binding residues include Cys-350, Cys-410, and Cys-413.

This sequence belongs to the aconitase/IPM isomerase family. LeuC type 1 subfamily. Heterodimer of LeuC and LeuD. [4Fe-4S] cluster serves as cofactor.

The catalysed reaction is (2R,3S)-3-isopropylmalate = (2S)-2-isopropylmalate. The protein operates within amino-acid biosynthesis; L-leucine biosynthesis; L-leucine from 3-methyl-2-oxobutanoate: step 2/4. Its function is as follows. Catalyzes the isomerization between 2-isopropylmalate and 3-isopropylmalate, via the formation of 2-isopropylmaleate. This chain is 3-isopropylmalate dehydratase large subunit, found in Rhodopseudomonas palustris (strain TIE-1).